The sequence spans 35 residues: Photosystem II reaction center protein Psb30 (35 aa).

A helical membrane pass occupies residues Val-6–Tyr-26.

The protein belongs to the Psb30/Ycf12 family. PSII is composed of 1 copy each of membrane proteins PsbA, PsbB, PsbC, PsbD, PsbE, PsbF, PsbH, PsbI, PsbJ, PsbK, PsbL, PsbM, PsbT, PsbY, PsbZ, Psb30/Ycf12, peripheral proteins of the oxygen-evolving complex and a large number of cofactors. It forms dimeric complexes.

The protein resides in the plastid. Its subcellular location is the chloroplast thylakoid membrane. Functionally, a core subunit of photosystem II (PSII), probably helps stabilize the reaction center. The sequence is that of Photosystem II reaction center protein Psb30 from Cyanidium caldarium (Red alga).